Reading from the N-terminus, the 470-residue chain is Glucose-1-phosphate adenylyltransferase (470 aa).

Residues Gly164, 181–182 (EK), and Ser199 contribute to the alpha-D-glucose 1-phosphate site.

It belongs to the bacterial/plant glucose-1-phosphate adenylyltransferase family. As to quaternary structure, homotetramer.

It carries out the reaction alpha-D-glucose 1-phosphate + ATP + H(+) = ADP-alpha-D-glucose + diphosphate. The protein operates within glycan biosynthesis; glycogen biosynthesis. Functionally, involved in the biosynthesis of ADP-glucose, a building block required for the elongation reactions to produce glycogen. Catalyzes the reaction between ATP and alpha-D-glucose 1-phosphate (G1P) to produce pyrophosphate and ADP-Glc. This Pseudarthrobacter chlorophenolicus (strain ATCC 700700 / DSM 12829 / CIP 107037 / JCM 12360 / KCTC 9906 / NCIMB 13794 / A6) (Arthrobacter chlorophenolicus) protein is Glucose-1-phosphate adenylyltransferase.